A 555-amino-acid polypeptide reads, in one-letter code: Urocanate hydratase (555 aa).

NAD(+) is bound by residues 51 to 52 (GG), glutamine 129, 175 to 177 (GMG), glutamate 195, 262 to 266 (QTSAH), 272 to 273 (YL), and tyrosine 321. Cysteine 409 is an active-site residue. NAD(+) is bound at residue glycine 491.

This sequence belongs to the urocanase family. NAD(+) is required as a cofactor.

It is found in the cytoplasm. It catalyses the reaction 4-imidazolone-5-propanoate = trans-urocanate + H2O. It functions in the pathway amino-acid degradation; L-histidine degradation into L-glutamate; N-formimidoyl-L-glutamate from L-histidine: step 2/3. Its function is as follows. Catalyzes the conversion of urocanate to 4-imidazolone-5-propionate. This Xanthomonas axonopodis pv. citri (strain 306) protein is Urocanate hydratase.